We begin with the raw amino-acid sequence, 569 residues long: Urease subunit alpha (569 aa).

The Urease domain occupies 132-569; the sequence is GGIDSHIHFI…LPLAQRYFLF (438 aa). Positions 137, 139, and 220 each coordinate Ni(2+). K220 is subject to N6-carboxylysine. H222 is a binding site for substrate. Positions 249 and 275 each coordinate Ni(2+). The active-site Proton donor is H323. D363 provides a ligand contact to Ni(2+).

The protein belongs to the metallo-dependent hydrolases superfamily. Urease alpha subunit family. In terms of assembly, heterotrimer of UreA (gamma), UreB (beta) and UreC (alpha) subunits. Three heterotrimers associate to form the active enzyme. Requires Ni cation as cofactor. Post-translationally, carboxylation allows a single lysine to coordinate two nickel ions.

It localises to the cytoplasm. The enzyme catalyses urea + 2 H2O + H(+) = hydrogencarbonate + 2 NH4(+). Its pathway is nitrogen metabolism; urea degradation; CO(2) and NH(3) from urea (urease route): step 1/1. This chain is Urease subunit alpha, found in Dechloromonas aromatica (strain RCB).